The sequence spans 652 residues: MSQIHKHPIPAAIAEHALITPEKYQHYYQQSVQNPDEFWGEQGKIIDWIKPYKTVKNTSFDPGHVSIRWFEDGTLNLAANCLDRHLAERGDQTAIIWEGDDPNQSKTVTYKQLHHDVCQFANVLKSLGIKKGDVVAIYMPMVPEAAVAMLACARIGAVHSVIFGGFSPDAVAGRIIDSHSKLVITADEGIRAGRAIPLKKNVDEALKNPAITSIKNVVVFQRTGNASYWEDGRDVWWHDLIKEASADCPPEEMNAEDPLFILYTSGSTGKPKGVVHTTGGYLVYAALTFKYVFDYHPGDIYWCTADVGWVTGHSYLLYGPLACGAITLMFEGVPNYPGVNRLSQVVDKHKVNILYTAPTAIRALMAEGDKAIEGTKRDSLRIMGSVGEPINPEAWEWYYNKIGNSKCPIVDTWWQTETGGFMITPLPGATELKAGSATRPFFGVQPALVDNLGNPQEGVAEGNLVITDSWPGQARTLFGDHDRFEQTYFSTFKGMYFSGDGARRDEDGYYWITGRVDDVLNVSGHRLGTAEIESALVAHPKIAEAAVVGVPHNIKGQAIYAYITLNHGEEPTPELYTEVRNWVRKEIGPLATPDILHWTDSLPKTRSGKIMRRILRKIATGDTSNLGDTSTLADPSVVEKLLEEKQSMQTPS.

Residues 191 to 194 (RAGR), Thr311, and Asn335 contribute to the CoA site. Residues 387–389 (GEP), 411–416 (DTWWQT), Asp500, and Arg515 contribute to the ATP site. Ser523 contributes to the CoA binding site. Arg526 serves as a coordination point for ATP. 3 residues coordinate Mg(2+): Val537, His539, and Ile542. Arg584 provides a ligand contact to CoA. An N6-acetyllysine modification is found at Lys609.

Belongs to the ATP-dependent AMP-binding enzyme family. Requires Mg(2+) as cofactor. Post-translationally, acetylated. Deacetylation by the SIR2-homolog deacetylase activates the enzyme.

The catalysed reaction is acetate + ATP + CoA = acetyl-CoA + AMP + diphosphate. Catalyzes the conversion of acetate into acetyl-CoA (AcCoA), an essential intermediate at the junction of anabolic and catabolic pathways. Acs undergoes a two-step reaction. In the first half reaction, Acs combines acetate with ATP to form acetyl-adenylate (AcAMP) intermediate. In the second half reaction, it can then transfer the acetyl group from AcAMP to the sulfhydryl group of CoA, forming the product AcCoA. Its function is as follows. Enables the cell to use acetate during aerobic growth to generate energy via the TCA cycle, and biosynthetic compounds via the glyoxylate shunt. Acetylates CheY, the response regulator involved in flagellar movement and chemotaxis. This Yersinia pseudotuberculosis serotype I (strain IP32953) protein is Acetyl-coenzyme A synthetase.